The primary structure comprises 1334 residues: Aldehyde oxidase 1 (1334 aa).

One can recognise a 2Fe-2S ferredoxin-type domain in the interval proline 5–isoleucine 92. [2Fe-2S] cluster is bound by residues cysteine 44, cysteine 49, cysteine 52, and cysteine 74. Glutamine 113 provides a ligand contact to Mo-molybdopterin. Residues cysteine 114, cysteine 117, cysteine 149, and cysteine 151 each coordinate [2Fe-2S] cluster. Mo-molybdopterin is bound at residue cysteine 151. Positions phenylalanine 236–lysine 421 constitute an FAD-binding PCMH-type domain. FAD is bound by residues valine 264–valine 271, alanine 345, serine 354, histidine 358, aspartate 367, and leucine 411. Mo-molybdopterin is bound by residues alanine 802–phenylalanine 803 and methionine 1043. Phosphoserine is present on serine 1064. Residues glycine 1084–valine 1087, glutamine 1199, and leucine 1264 each bind Mo-molybdopterin. Glutamate 1266 (proton acceptor; for azaheterocycle hydroxylase activity) is an active-site residue.

Belongs to the xanthine dehydrogenase family. As to quaternary structure, homodimer. Requires [2Fe-2S] cluster as cofactor. The cofactor is FAD. Mo-molybdopterin is required as a cofactor. The N-terminus is blocked. In terms of tissue distribution, very high expression in liver and lung. High expression in kidney, pancreas, brain stem and spinal cord. Moderate expression in heart, testis, eye, cerebral cortex and cerebellum. Low expression in stomach and muscle.

Its subcellular location is the cytoplasm. It catalyses the reaction an aldehyde + O2 + H2O = a carboxylate + H2O2 + H(+). The enzyme catalyses retinal + O2 + H2O = retinoate + H2O2 + H(+). The catalysed reaction is all-trans-retinal + O2 + H2O = all-trans-retinoate + H2O2 + H(+). Inhibited by hydralazine and menadione. Not inhibited by BOF-4272 or allopurinol, xanthine dehydrogenase potent inhibitors. In contrast to guinea pig, human and rat, isovanillin is not an inhibitor but a substrate for AOX1 in rabbit. Oxidase with broad substrate specificity, oxidizing aromatic azaheterocycles, such as N1-methylnicotinamide, N-methylphthalazinium and phthalazine, as well as aldehydes, such as benzaldehyde, retinal, pyridoxal, and vanillin. Plays a key role in the metabolism of xenobiotics and drugs containing aromatic azaheterocyclic substituents. Participates in the bioactivation of prodrugs such as famciclovir, catalyzing the oxidation step from 6-deoxypenciclovir to penciclovir, which is a potent antiviral agent. Is probably involved in the regulation of reactive oxygen species homeostasis. May be a prominent source of superoxide generation via the one-electron reduction of molecular oxygen. May also catalyze nitric oxide (NO) production via the reduction of nitrite to NO with NADH or aldehyde as electron donor. May play a role in adipogenesis. Cannot use hypoxanthine and all-trans-retinol as substrate. This is Aldehyde oxidase 1 from Oryctolagus cuniculus (Rabbit).